The chain runs to 348 residues: Dihydroorotate dehydrogenase (quinone) (348 aa).

FMN is bound by residues 65–69 (AGLDK) and Thr89. A substrate-binding site is contributed by Lys69. 114 to 118 (NRLGF) contacts substrate. FMN-binding residues include Asn147 and Asn180. Position 180 (Asn180) interacts with substrate. The active-site Nucleophile is Ser183. Asn185 serves as a coordination point for substrate. FMN-binding residues include Lys225 and Thr253. 254-255 (NT) lines the substrate pocket. FMN is bound by residues Gly276, Gly305, and 326 to 327 (YS).

Belongs to the dihydroorotate dehydrogenase family. Type 2 subfamily. As to quaternary structure, monomer. Requires FMN as cofactor.

It localises to the cell membrane. The catalysed reaction is (S)-dihydroorotate + a quinone = orotate + a quinol. Its pathway is pyrimidine metabolism; UMP biosynthesis via de novo pathway; orotate from (S)-dihydroorotate (quinone route): step 1/1. Functionally, catalyzes the conversion of dihydroorotate to orotate with quinone as electron acceptor. This is Dihydroorotate dehydrogenase (quinone) from Delftia acidovorans (strain DSM 14801 / SPH-1).